We begin with the raw amino-acid sequence, 256 residues long: Trypsin alpha (256 aa).

The first 22 residues, 1 to 22 (MLKIVILLSAVVCALGGTVPEG), serve as a signal peptide directing secretion. Positions 23–30 (LLPQLDGR) are cleaved as a propeptide — activation peptide. The 224-residue stretch at 31–254 (IVGGSATTIS…LRSWVISTAN (224 aa)) folds into the Peptidase S1 domain. Residues cysteine 56 and cysteine 72 are joined by a disulfide bond. Catalysis depends on charge relay system residues histidine 71 and aspartate 116. Intrachain disulfides connect cysteine 180/cysteine 197 and cysteine 206/cysteine 230. Serine 210 functions as the Charge relay system in the catalytic mechanism.

The protein belongs to the peptidase S1 family.

It is found in the secreted. Its subcellular location is the extracellular space. The catalysed reaction is Preferential cleavage: Arg-|-Xaa, Lys-|-Xaa.. The chain is Trypsin alpha (alphaTry) from Drosophila erecta (Fruit fly).